A 471-amino-acid polypeptide reads, in one-letter code: 6-phosphogluconate dehydrogenase, decarboxylating (471 aa).

NADP(+) is bound by residues 10–15 (GLAVMG), 33–35 (NRT), 75–77 (VKA), and asparagine 103. Residues asparagine 103 and 129–131 (SGG) contribute to the substrate site. Residue lysine 183 is the Proton acceptor of the active site. Substrate is bound at residue 186–187 (HN). Glutamate 190 functions as the Proton donor in the catalytic mechanism. Substrate contacts are provided by tyrosine 191, lysine 263, arginine 290, arginine 449, and histidine 455.

This sequence belongs to the 6-phosphogluconate dehydrogenase family. Homodimer.

The catalysed reaction is 6-phospho-D-gluconate + NADP(+) = D-ribulose 5-phosphate + CO2 + NADPH. It functions in the pathway carbohydrate degradation; pentose phosphate pathway; D-ribulose 5-phosphate from D-glucose 6-phosphate (oxidative stage): step 3/3. In terms of biological role, catalyzes the oxidative decarboxylation of 6-phosphogluconate to ribulose 5-phosphate and CO(2), with concomitant reduction of NADP to NADPH. In Synechococcus elongatus (strain ATCC 33912 / PCC 7942 / FACHB-805) (Anacystis nidulans R2), this protein is 6-phosphogluconate dehydrogenase, decarboxylating (gnd).